The chain runs to 106 residues: ATP-dependent Clp protease adapter protein ClpS (106 aa).

Belongs to the ClpS family. As to quaternary structure, binds to the N-terminal domain of the chaperone ClpA.

In terms of biological role, involved in the modulation of the specificity of the ClpAP-mediated ATP-dependent protein degradation. The chain is ATP-dependent Clp protease adapter protein ClpS from Erwinia tasmaniensis (strain DSM 17950 / CFBP 7177 / CIP 109463 / NCPPB 4357 / Et1/99).